The chain runs to 137 residues: Large-conductance mechanosensitive channel (137 aa).

The next 2 helical transmembrane spans lie at 10–30 and 76–96; these read FAMR…AAFG and GVFI…FMAI.

This sequence belongs to the MscL family. As to quaternary structure, homopentamer.

The protein resides in the cell inner membrane. Functionally, channel that opens in response to stretch forces in the membrane lipid bilayer. May participate in the regulation of osmotic pressure changes within the cell. The chain is Large-conductance mechanosensitive channel from Enterobacter sp. (strain 638).